Here is a 282-residue protein sequence, read N- to C-terminus: Serine/threonine-protein kinase Aurora-2 (282 aa).

The region spanning 19-270 (FDIGKPLGRG…LHKLLEHPWI (252 aa)) is the Protein kinase domain. Residues 25 to 33 (LGRGKFGHV) and K48 contribute to the ATP site. D142 functions as the Proton acceptor in the catalytic mechanism. Phosphoserine is present on S164. T173 bears the Phosphothreonine mark.

It belongs to the protein kinase superfamily. Ser/Thr protein kinase family. Aurora subfamily. Phosphorylation at Thr-173 may regulate activity and degradation of AUR2 in a cell cycle dependent manner. As to expression, abundant in roots, flowers and flower buds, low or absent in expanded leaves, stems and siliques.

Its subcellular location is the nucleus membrane. The protein resides in the cytoplasm. The protein localises to the cytoskeleton. It localises to the spindle. It is found in the spindle pole. It carries out the reaction L-seryl-[protein] + ATP = O-phospho-L-seryl-[protein] + ADP + H(+). The catalysed reaction is L-threonyl-[protein] + ATP = O-phospho-L-threonyl-[protein] + ADP + H(+). Phosphorylates specifically 'Ser-10' of histone H3 in vitro. Associates with cytoskeletal structures that are necessary for cytokinesis and with the microtubule spindle. Might colocalize with gamma-tubulin and function in microtubule organizing centers (MTOCs). The polypeptide is Serine/threonine-protein kinase Aurora-2 (AUR2) (Arabidopsis thaliana (Mouse-ear cress)).